Consider the following 804-residue polypeptide: Phosphatidylinositol 4-kinase beta (804 aa).

The region spanning 55–245 (LEKVKMIHGS…GTKLRKLILS (191 aa)) is the PIK helical domain. Disordered regions lie at residues 69–122 (LDKV…ARRR) and 251–309 (AHKK…EPVR). Composition is skewed to polar residues over residues 91 to 103 (KLTNTGHTSTSSR) and 281 to 300 (DATVSISLSSNLKRTSSNPK). Positions 523-789 (EPWEEKVRRI…MVDGSMRSIT (267 aa)) constitute a PI3K/PI4K catalytic domain. The tract at residues 529 to 535 (VRRIREG) is G-loop. Residues 656–664 (QVKDRHNGN) are catalytic loop. The tract at residues 675–699 (HIDFGFILSSSPRNLGFETSAFKLT) is activation loop.

The protein belongs to the PI3/PI4-kinase family. Type III PI4K subfamily. Mg(2+) serves as cofactor. It depends on Mn(2+) as a cofactor.

The protein localises to the endomembrane system. It is found in the mitochondrion outer membrane. Its subcellular location is the rough endoplasmic reticulum membrane. The catalysed reaction is a 1,2-diacyl-sn-glycero-3-phospho-(1D-myo-inositol) + ATP = a 1,2-diacyl-sn-glycero-3-phospho-(1D-myo-inositol 4-phosphate) + ADP + H(+). In terms of biological role, phosphorylates phosphatidylinositol (PI) in the first committed step in the production of the second messenger inositol-1,4,5,-trisphosphate (PIP). May play an important role in the inner ear development. In Xenopus laevis (African clawed frog), this protein is Phosphatidylinositol 4-kinase beta (pi4kb).